Consider the following 199-residue polypeptide: dTTP/UTP pyrophosphatase (199 aa).

Asp78 (proton acceptor) is an active-site residue.

Belongs to the Maf family. YhdE subfamily. A divalent metal cation is required as a cofactor.

It is found in the cytoplasm. It carries out the reaction dTTP + H2O = dTMP + diphosphate + H(+). The catalysed reaction is UTP + H2O = UMP + diphosphate + H(+). Functionally, nucleoside triphosphate pyrophosphatase that hydrolyzes dTTP and UTP. May have a dual role in cell division arrest and in preventing the incorporation of modified nucleotides into cellular nucleic acids. The polypeptide is dTTP/UTP pyrophosphatase (Clostridium acetobutylicum (strain ATCC 824 / DSM 792 / JCM 1419 / IAM 19013 / LMG 5710 / NBRC 13948 / NRRL B-527 / VKM B-1787 / 2291 / W)).